The primary structure comprises 982 residues: MANSMNGRNPGGRGGNPRKGRILGIIDAIQDAVGPPKQAAADRRTVEKTWKLMDKVVRLCQNPKLQLKNSPPYILDILPDTYQHLRLILSKYDDNQKLAQLSENEYFKIYIDSLMKKSKRAIRLFKEGKERMYEEQSQDRRNLTKLSLIFSHMLAEIKAIFPNGQFQGDNFRITKADAAEFWRKFFGDKTIVPWKVFRQCLHEVHQISSGLEAMALKSTIDLTCNDYISVFEFDIFTRLFQPWGSILRNWNFLAVTHPGYMAFLTYDEVKARLQKYSTKPGSYIFRLSCTRLGQWAIGYVTGDGNILQTIPHNKPLFQALIDGSREGFYLYPDGRSYNPDLTGLCEPTPHDHIKVTQEQYELYCEMGSTFQLCKICAENDKDVKIEPCGHLMCTSCLTAWQESDGQGCPFCRCEIKGTEPIIVDPFDPRDEGSRCCSIIDPFGMPMLDLDDDDDREESLMMNRLANVRKCTDRQNSPVTSPGSSPLAQRRKPQPDPLQIPHLSLPPVPPRLDLIQKGIVRSPCGSPTGSPKSSPCMVRKQDKPLPAPPPPLRDPPPPPPERPPPIPPDNRLSRHIHHVESVPSRDPPMPLEAWCPRDVFGTNQLVGCRLLGEGSPKPGITASSNVNGRHSRVGSDPVLMRKHRRHDLPLEGAKVFSNGHLGSEEYDVPPRLSPPPPVTTLLPSIKCTGPLANSLSEKTRDPVEEDDDEYKIPSSHPVSLNSQPSHCHNVKPPVRSCDNGHCMLNGTHGPSSEKKSNIPDLSIYLKGDVFDSASDPVPLPPARPPTRDNPKHGSSLNRTPSDYDLLIPPLGEDAFDALPPSLPPPPPPARHSLIEHSKPPGSSSRPSSGQDLFLLPSDPFVDLASGQVPLPPARRLPGENVKTNRTSQDYDQLPSCSDGSQAPARPPKPRPRRTAPEIHHRKPHGPEAALENVDAKIAKLMGEGYAFEEVKRALEIAQNNVEVARSILREFAFPPPVSPRLNL.

A 4H region spans residues 35–167 (PPKQAAADRR…KAIFPNGQFQ (133 aa)). The Cbl-PTB domain maps to 35-343 (PPKQAAADRR…GRSYNPDLTG (309 aa)). Residues 168 to 240 (GDNFRITKAD…FEFDIFTRLF (73 aa)) are EF-hand-like. Ca(2+)-binding residues include Asp-221, Thr-223, Asn-225, Tyr-227, and Glu-232. The interval 241–343 (QPWGSILRNW…GRSYNPDLTG (103 aa)) is SH2-like. At Ser-282 the chain carries Phosphoserine; by PKC/PRKCQ. Arg-286 contributes to the 4-O-phospho-L-tyrosine binding site. A linker region spans residues 344-372 (LCEPTPHDHIKVTQEQYELYCEMGSTFQL). At Tyr-363 the chain carries Phosphotyrosine. The RING-type zinc-finger motif lies at 373–412 (CKICAENDKDVKIEPCGHLMCTSCLTAWQESDGQGCPFCR). Positions 466 to 571 (NVRKCTDRQN…PPPIPPDNRL (106 aa)) are disordered. Over residues 473–486 (RQNSPVTSPGSSPL) the composition is skewed to polar residues. Residues Ser-476, Ser-480, Ser-484, Ser-521, Ser-525, and Ser-529 each carry the phosphoserine modification. An interaction with VAV1 region spans residues 543 to 568 (PLPAPPPPLRDPPPPPPERPPPIPPD). Positions 544–567 (LPAPPPPLRDPPPPPPERPPPIPP) are enriched in pro residues. Ser-634 is modified (phosphoserine). A phosphotyrosine mark is found at Tyr-665 and Tyr-709. 2 disordered regions span residues 688–731 (GPLA…NVKP) and 769–929 (FDSA…EAAL). Over residues 715–725 (HPVSLNSQPSH) the composition is skewed to polar residues. Over residues 819–828 (PSLPPPPPPA) the composition is skewed to pro residues. Positions 838–848 (PPGSSSRPSSG) are enriched in low complexity. Residues 880-899 (VKTNRTSQDYDQLPSCSDGS) show a composition bias toward polar residues. Tyr-889 is modified (phosphotyrosine). The segment at 891-927 (QLPSCSDGSQAPARPPKPRPRRTAPEIHHRKPHGPEA) is interaction with SH3KBP1. The segment covering 906 to 922 (PKPRPRRTAPEIHHRKP) has biased composition (basic residues). Positions 931 to 970 (NVDAKIAKLMGEGYAFEEVKRALEIAQNNVEVARSILREF) constitute a UBA domain.

In terms of assembly, interacts with SH3 domain-containing proteins LCK, CRK and SORBS1. Interacts with LCP2 and ZAP70. Interacts with CBL. Interacts with SH3 domain-containing proteins VAV1, FYN, FGR, PLCG1, GRB2, CRKL, PIK3R1 and SH3KBP1/CIN85. Identified in heterotrimeric complexes with SH3KBP1/CIN85, CD2AP and ARHGEF7, where one CBLB peptide binds two copies of the other protein. Interacts with poly-ubiquitinated proteins. Dimerization is required for the binding of poly-ubiquitin, but not for the binding of mono-ubiquitin. Interacts with EGFR (phosphorylated). Interacts with IFT20. Post-translationally, phosphorylated on tyrosine and serine residues upon TCR or BCR activation, and upon various types of cell stimulation. In terms of processing, auto-ubiquitinated upon EGF-mediated cell activation or upon T-cell costimulation by CD28; which promotes proteasomal degradation. As to expression, expressed in placenta, heart, lung, kidney, spleen, ovary and testis, as well as fetal brain and liver and hematopoietic cell lines, but not in adult brain, liver, pancreas, salivary gland, or skeletal muscle. Present in lymphocytes (at protein level).

It is found in the cytoplasm. It carries out the reaction S-ubiquitinyl-[E2 ubiquitin-conjugating enzyme]-L-cysteine + [acceptor protein]-L-lysine = [E2 ubiquitin-conjugating enzyme]-L-cysteine + N(6)-ubiquitinyl-[acceptor protein]-L-lysine.. Its pathway is protein modification; protein ubiquitination. E3 ubiquitin-protein ligase which accepts ubiquitin from specific E2 ubiquitin-conjugating enzymes, and transfers it to substrates, generally promoting their degradation by the proteasome. Negatively regulates TCR (T-cell receptor), BCR (B-cell receptor) and FCER1 (high affinity immunoglobulin epsilon receptor) signal transduction pathways. In naive T-cells, inhibits VAV1 activation upon TCR engagement and imposes a requirement for CD28 costimulation for proliferation and IL-2 production. Also acts by promoting PIK3R1/p85 ubiquitination, which impairs its recruitment to the TCR and subsequent activation. In activated T-cells, inhibits PLCG1 activation and calcium mobilization upon restimulation and promotes anergy. In B-cells, acts by ubiquitinating SYK and promoting its proteasomal degradation. Slightly promotes SRC ubiquitination. May be involved in EGFR ubiquitination and internalization. May be functionally coupled with the E2 ubiquitin-protein ligase UB2D3. In association with CBL, required for proper feedback inhibition of ciliary platelet-derived growth factor receptor-alpha (PDGFRA) signaling pathway via ubiquitination and internalization of PDGFRA. This Homo sapiens (Human) protein is E3 ubiquitin-protein ligase CBL-B (CBLB).